The primary structure comprises 157 residues: S-ribosylhomocysteine lyase (157 aa).

The Fe cation site is built by His-54, His-58, and Cys-126.

This sequence belongs to the LuxS family. As to quaternary structure, homodimer. Requires Fe cation as cofactor.

The enzyme catalyses S-(5-deoxy-D-ribos-5-yl)-L-homocysteine = (S)-4,5-dihydroxypentane-2,3-dione + L-homocysteine. Functionally, involved in the synthesis of autoinducer 2 (AI-2) which is secreted by bacteria and is used to communicate both the cell density and the metabolic potential of the environment. The regulation of gene expression in response to changes in cell density is called quorum sensing. Catalyzes the transformation of S-ribosylhomocysteine (RHC) to homocysteine (HC) and 4,5-dihydroxy-2,3-pentadione (DPD). The protein is S-ribosylhomocysteine lyase of Bacillus cytotoxicus (strain DSM 22905 / CIP 110041 / 391-98 / NVH 391-98).